The chain runs to 256 residues: MTFISQVNKWFVNANVNSAAKLRLFCIPYAGGGASAFYEWSHFFPKEIEVCSIQLPGRENRGAEVPLTNLQQIVEIVAEEIQPLINIPFAFLGHSMGALISFELARTIRQKSNVNPVHLFVSGRHAPQIPCAKQDYHLLPDEQFIQELRSLNGTPEIVLQDAEMMSILLPRLRADFSVCGSYQYKNDEPFECPITAFGGKNDNGVTYQSLEAWREQTKREFSVCMYPGDHFFLYESKYEMIEFMCKQLRLVLAPKI.

Ser95 is a catalytic residue.

This sequence belongs to the thioesterase family.

It participates in antibiotic biosynthesis; gramicidin S biosynthesis. Probable thioesterase involved in the biosynthesis of gramicidin S. The polypeptide is Gramicidin S biosynthesis protein GrsT (grsT) (Aneurinibacillus migulanus (Bacillus migulanus)).